Reading from the N-terminus, the 242-residue chain is uncharacterized protein (242 aa).

Residues 3–116 enclose the Response regulatory domain; sequence TALVIDDEPF…RLRKTVKRLS (114 aa). The residue at position 54 (Asp-54) is a 4-aspartylphosphate. An HTH LytTR-type domain is found at 139 to 240; that stretch reads IPCIGHNRIV…LKLLKEMLGL (102 aa).

This is an uncharacterized protein from Vibrio vulnificus (strain CMCP6).